Consider the following 749-residue polypeptide: Polyribonucleotide nucleotidyltransferase (749 aa).

Residues D487 and D493 each coordinate Mg(2+). Residues P554–I613 form the KH domain. The 69-residue stretch at G623–K691 folds into the S1 motif domain. The interval K691 to N749 is disordered. A compositionally biased stretch (low complexity) spans S699–K713. Positions D714–D723 are enriched in basic and acidic residues.

It belongs to the polyribonucleotide nucleotidyltransferase family. Mg(2+) serves as cofactor.

Its subcellular location is the cytoplasm. The catalysed reaction is RNA(n+1) + phosphate = RNA(n) + a ribonucleoside 5'-diphosphate. Involved in mRNA degradation. Catalyzes the phosphorolysis of single-stranded polyribonucleotides processively in the 3'- to 5'-direction. This chain is Polyribonucleotide nucleotidyltransferase, found in Rickettsia conorii (strain ATCC VR-613 / Malish 7).